Consider the following 58-residue polypeptide: Large ribosomal subunit protein uL30 (58 aa).

Belongs to the universal ribosomal protein uL30 family. Part of the 50S ribosomal subunit.

This chain is Large ribosomal subunit protein uL30, found in Psychromonas ingrahamii (strain DSM 17664 / CCUG 51855 / 37).